The sequence spans 240 residues: Ribosomal RNA large subunit methyltransferase E (240 aa).

Residues Met-1–Gly-20 show a composition bias toward gly residues. Positions Met-1–Gly-33 are disordered. Residues Gly-92, Trp-94, Asp-115, Asp-131, and Asp-155 each contribute to the S-adenosyl-L-methionine site. Catalysis depends on Lys-195, which acts as the Proton acceptor.

It belongs to the class I-like SAM-binding methyltransferase superfamily. RNA methyltransferase RlmE family.

The protein resides in the cytoplasm. It catalyses the reaction uridine(2552) in 23S rRNA + S-adenosyl-L-methionine = 2'-O-methyluridine(2552) in 23S rRNA + S-adenosyl-L-homocysteine + H(+). In terms of biological role, specifically methylates the uridine in position 2552 of 23S rRNA at the 2'-O position of the ribose in the fully assembled 50S ribosomal subunit. The polypeptide is Ribosomal RNA large subunit methyltransferase E (Brucella abortus (strain S19)).